Consider the following 446-residue polypeptide: Tubulin gamma chain (446 aa).

142 to 148 (AGGTGSG) provides a ligand contact to GTP.

It belongs to the tubulin family. In terms of assembly, interacts with mto1. Interacts with mto2.

The protein localises to the cytoplasm. It localises to the cytoskeleton. The protein resides in the microtubule organizing center. Its subcellular location is the spindle pole body. Its function is as follows. Tubulin is the major constituent of microtubules. The gamma chain is found at microtubule organizing centers (MTOC) such as the spindle poles or the centrosome, suggesting that it is involved in the minus-end nucleation of microtubule assembly. The sequence is that of Tubulin gamma chain from Schizosaccharomyces pombe (strain 972 / ATCC 24843) (Fission yeast).